The following is a 3132-amino-acid chain: Enniatin synthetase (3132 aa).

A condensation 1 region spans residues 53–466 (ADDKQRAVGH…VEKVDMMTQE (414 aa)). Residues 186–212 (NDEHPRQFETPDSSQATPEEDLQPNPS) form a disordered region. Residues 495-887 (SQSPNKAAVA…GRMDSQVKIR (393 aa)) form an adenylation 1 region. The segment at 994-1013 (SQKTHSTPSQQSQAAISSGT) is disordered. The Carrier 1 domain occupies 1010–1086 (SSGTDTETKL…GLKAIVIGTS (77 aa)). Residue Ser-1047 is modified to O-(pantetheine 4'-phosphoryl)serine. Residues 1105–1534 (SYAQNRMWFL…ETCISVLPLT (430 aa)) form a condensation 2 region. The interval 1563–1960 (FREQAAANPE…GRMDNQFKIR (398 aa)) is adenylation 2. An S-adenosyl-L-methionine-dependent N-methyltransferase region spans residues 2021–2177 (EGWQDHFESG…YLAEVIDGLI (157 aa)). Carrier domains are found at residues 2504 to 2578 (FPIS…RQGL) and 2598 to 2672 (APRT…ESSH). Residues Ser-2538 and Ser-2632 each carry the O-(pantetheine 4'-phosphoryl)serine modification. The tract at residues 2719-3124 (QDVYPSTQMQ…RHVLEEVCKT (406 aa)) is condensation 3.

Belongs to the NRP synthetase family. It depends on pantetheine 4'-phosphate as a cofactor.

Its pathway is antibiotic biosynthesis; enniatin biosynthesis. In terms of biological role, nonribosomal peptide synthetase that synthesizes enniatin by coupling three D-hydroxycarboxylic acids and three L-amino acids via amide and ester bonds in an alternating fashion. Whereas ESYN1 can accept different amino acids as precursors (L-valine, L-isoleucine or L-leucine), only one species of D-hydroxycarboxylic acid can be found in natural enniatin isolates (D-hydroxyisovaleric acid, D-Hiv). D-Hiv stems from L-valine deanimation by a valine aminotransferase to 2-keto-isovaleric acid (2-Kiv), which becomes subsequently reduced by a keto-isovaleric acid reductase (KivR) to D-Hiv. In Fusarium oxysporum (Fusarium vascular wilt), this protein is Enniatin synthetase.